A 122-amino-acid chain; its full sequence is Large ribosomal subunit protein uL18 (122 aa).

The span at 1 to 19 (MSKLSRKQQTQKRHKRLRR) shows a compositional bias: basic residues. Residues 1–27 (MSKLSRKQQTQKRHKRLRRNLSGTESR) are disordered.

It belongs to the universal ribosomal protein uL18 family. In terms of assembly, part of the 50S ribosomal subunit; part of the 5S rRNA/L5/L18/L25 subcomplex. Contacts the 5S and 23S rRNAs.

In terms of biological role, this is one of the proteins that bind and probably mediate the attachment of the 5S RNA into the large ribosomal subunit, where it forms part of the central protuberance. This chain is Large ribosomal subunit protein uL18, found in Prochlorococcus marinus (strain NATL1A).